The primary structure comprises 603 residues: Penicillin-binding protein activator LpoA (603 aa).

The signal sequence occupies residues 1–26 (MANMTPRKNSVTRLIAPVALALTLAA). A lipid anchor (N-palmitoyl cysteine) is attached at C27. Residue C27 is the site of S-diacylglycerol cysteine attachment.

It belongs to the LpoA family. In terms of assembly, interacts with PBP1a.

Its subcellular location is the cell outer membrane. Functionally, regulator of peptidoglycan synthesis that is essential for the function of penicillin-binding protein 1A (PBP1a). The protein is Penicillin-binding protein activator LpoA of Aliivibrio fischeri (strain ATCC 700601 / ES114) (Vibrio fischeri).